Consider the following 395-residue polypeptide: 1-deoxy-D-xylulose 5-phosphate reductoisomerase (395 aa).

NADPH contacts are provided by T10, G11, S12, I13, A36, and N123. Position 124 (K124) interacts with 1-deoxy-D-xylulose 5-phosphate. Position 125 (E125) interacts with NADPH. D149 lines the Mn(2+) pocket. The 1-deoxy-D-xylulose 5-phosphate site is built by S150, E151, S185, and H208. E151 is a binding site for Mn(2+). G214 is an NADPH binding site. Positions 221, 226, 227, and 230 each coordinate 1-deoxy-D-xylulose 5-phosphate. E230 contributes to the Mn(2+) binding site.

It belongs to the DXR family. It depends on Mg(2+) as a cofactor. Requires Mn(2+) as cofactor.

It catalyses the reaction 2-C-methyl-D-erythritol 4-phosphate + NADP(+) = 1-deoxy-D-xylulose 5-phosphate + NADPH + H(+). It functions in the pathway isoprenoid biosynthesis; isopentenyl diphosphate biosynthesis via DXP pathway; isopentenyl diphosphate from 1-deoxy-D-xylulose 5-phosphate: step 1/6. Catalyzes the NADPH-dependent rearrangement and reduction of 1-deoxy-D-xylulose-5-phosphate (DXP) to 2-C-methyl-D-erythritol 4-phosphate (MEP). In Shewanella amazonensis (strain ATCC BAA-1098 / SB2B), this protein is 1-deoxy-D-xylulose 5-phosphate reductoisomerase.